A 154-amino-acid polypeptide reads, in one-letter code: UPF0127 protein TSIB_1463 (154 aa).

The protein belongs to the UPF0127 family.

This Thermococcus sibiricus (strain DSM 12597 / MM 739) protein is UPF0127 protein TSIB_1463.